The following is an 86-amino-acid chain: Stage V sporulation protein S (86 aa).

In terms of biological role, interferes with sporulation at an early stage. Seems to play a positive role in allowing cells to progress beyond stage V of sporulation. This is Stage V sporulation protein S from Bacillus subtilis (strain 168).